We begin with the raw amino-acid sequence, 1037 residues long: Caspase recruitment domain-containing protein 6 (1037 aa).

An N-acetylalanine modification is found at Ala-2. In terms of domain architecture, CARD spans 3 to 94 (TESTPSEIIE…QSAAICGLRH (92 aa)). Ser-154 carries the post-translational modification Phosphoserine. Disordered stretches follow at residues 235 to 270 (DPEH…TSLS), 669 to 704 (VSSG…PIQE), and 887 to 1037 (RTSH…GGKH). Residues 242–261 (DGEEDFENSETTEFSGEEPS) are compositionally biased toward acidic residues. Over residues 690 to 699 (LKSSSKSQAL) the composition is skewed to low complexity. 3 stretches are compositionally biased toward polar residues: residues 911-928 (ASQQ…SNPA), 938-954 (KSSQ…TVKH), and 963-984 (VPSQ…QTKP). A Phosphoserine modification is found at Ser-985. Over residues 994-1012 (PSQPWPPQSKPSQPRPPQP) the composition is skewed to pro residues. A compositionally biased stretch (basic residues) spans 1023–1037 (KAHHSKAGQKRGGKH).

May be involved in apoptosis. The polypeptide is Caspase recruitment domain-containing protein 6 (CARD6) (Homo sapiens (Human)).